The sequence spans 228 residues: uncharacterized protein (228 aa).

This is an uncharacterized protein from Ictalurid herpesvirus 1 (strain Auburn) (IcHV-1).